The sequence spans 147 residues: Globin, polymeric component P2 (147 aa).

The Globin domain maps to 2–146; that stretch reads PLTADQVAAL…ISDALVAGLE (145 aa). H96 contacts heme b.

The protein belongs to the globin family. Polymer.

The chain is Globin, polymeric component P2 from Glycera dibranchiata (Bloodworm).